Here is a 91-residue protein sequence, read N- to C-terminus: MARPTGKKFDKRRQQQNPLFKRKKFCRFTAAGVEQIDYKDTETLKDFIGENGKITPARLTGTKAHYQRQLDTAIKRARFLALLPYTDQHKA.

It belongs to the bacterial ribosomal protein bS18 family. Part of the 30S ribosomal subunit. Forms a tight heterodimer with protein bS6.

Its function is as follows. Binds as a heterodimer with protein bS6 to the central domain of the 16S rRNA, where it helps stabilize the platform of the 30S subunit. The sequence is that of Small ribosomal subunit protein bS18 from Burkholderia multivorans (strain ATCC 17616 / 249).